A 1037-amino-acid polypeptide reads, in one-letter code: Mediator of RNA polymerase II transcription subunit 14 (1037 aa).

This sequence belongs to the Mediator complex subunit 14 family. Component of the Mediator complex.

It is found in the nucleus. In terms of biological role, component of the Mediator complex, a coactivator involved in the regulated transcription of nearly all RNA polymerase II-dependent genes. Mediator functions as a bridge to convey information from gene-specific regulatory proteins to the basal RNA polymerase II transcription machinery. Mediator is recruited to promoters by direct interactions with regulatory proteins and serves as a scaffold for the assembly of a functional preinitiation complex with RNA polymerase II and the general transcription factors. The sequence is that of Mediator of RNA polymerase II transcription subunit 14 (RGR1) from Candida glabrata (strain ATCC 2001 / BCRC 20586 / JCM 3761 / NBRC 0622 / NRRL Y-65 / CBS 138) (Yeast).